A 665-amino-acid chain; its full sequence is Protein Fe65 homolog (665 aa).

The segment covering 1 to 12 has biased composition (basic and acidic residues); it reads MREGTPRVRIEV. Disordered regions lie at residues 1–43 and 90–111; these read MREG…DTAT and SRGYSSAGRGQKGRREEERRRN. The span at 14–24 shows a compositional bias: polar residues; the sequence is KGSNRPSQFVS. Composition is skewed to basic and acidic residues over residues 27–40 and 102–111; these read EEQRLQRVQSRDSD and GRREEERRRN. Positions 233-266 constitute a WW domain; it reads KDLPPGWEKHEDPQGYSYYWHVDSGTIQRQPPPP. 2 consecutive PID domains span residues 330-456 and 499-615; these read VRFA…RDIC and FLGV…VLDA.

In terms of assembly, interacts (via PID 2 domain) with apl-1 (via cytoplasmic domain). Phosphorylated. Expressed in the pharynx (including pharyngeal muscle and nerve cells), ventral nerve cord and tail neurons.

Its subcellular location is the cytoplasm. The protein resides in the cytoskeleton. Modulates pharyngeal pumping activity, at least in part by regulating expression of the acetylcholinesterase genes ace-1 and ace-2. In Caenorhabditis elegans, this protein is Protein Fe65 homolog.